A 293-amino-acid polypeptide reads, in one-letter code: Ribosomal RNA small subunit methyltransferase H (293 aa).

S-adenosyl-L-methionine contacts are provided by residues 31 to 33, Asp49, Phe76, Asp97, and Gln104; that span reads GGY.

Belongs to the methyltransferase superfamily. RsmH family.

It is found in the cytoplasm. It carries out the reaction cytidine(1402) in 16S rRNA + S-adenosyl-L-methionine = N(4)-methylcytidine(1402) in 16S rRNA + S-adenosyl-L-homocysteine + H(+). Functionally, specifically methylates the N4 position of cytidine in position 1402 (C1402) of 16S rRNA. This Wolbachia sp. subsp. Drosophila simulans (strain wRi) protein is Ribosomal RNA small subunit methyltransferase H.